The sequence spans 505 residues: N-succinylglutamate 5-semialdehyde dehydrogenase (505 aa).

234 to 239 is an NAD(+) binding site; sequence GSAHTG. Residues glutamate 257 and cysteine 291 contribute to the active site.

The protein belongs to the aldehyde dehydrogenase family. AstD subfamily.

The enzyme catalyses N-succinyl-L-glutamate 5-semialdehyde + NAD(+) + H2O = N-succinyl-L-glutamate + NADH + 2 H(+). It participates in amino-acid degradation; L-arginine degradation via AST pathway; L-glutamate and succinate from L-arginine: step 4/5. Catalyzes the NAD-dependent reduction of succinylglutamate semialdehyde into succinylglutamate. This is N-succinylglutamate 5-semialdehyde dehydrogenase from Yersinia pseudotuberculosis serotype IB (strain PB1/+).